A 362-amino-acid polypeptide reads, in one-letter code: Ferredoxin--NADP reductase, leaf-type isozyme, chloroplastic (362 aa).

The segment at 1–20 is disordered; it reads MATAVSAAVSLPSSKSTSFS. The N-terminal 62 residues, 1 to 62, are a transit peptide targeting the chloroplast; it reads MATAVSAAVS…RAQVTTEAPA (62 aa). Residues 10–20 show a composition bias toward low complexity; the sequence is SLPSSKSTSFS. Residues 83-205 form the FAD-binding FR-type domain; sequence KEPYVGRCLL…TGPVGKEMLM (123 aa). FAD is bound by residues 141 to 144, 162 to 164, Tyr168, 179 to 181, and Thr220; these read RLYS, CVK, and VCS. NADP(+) is bound by residues Ser144 and Lys164. Residues Thr220, 252 to 253, 282 to 283, Lys292, 321 to 322, and Glu360 each bind NADP(+); these read VP, SR, and GL.

This sequence belongs to the ferredoxin--NADP reductase type 1 family. It depends on FAD as a cofactor.

It localises to the plastid. The protein localises to the chloroplast stroma. It is found in the chloroplast thylakoid membrane. The catalysed reaction is 2 reduced [2Fe-2S]-[ferredoxin] + NADP(+) + H(+) = 2 oxidized [2Fe-2S]-[ferredoxin] + NADPH. The protein operates within energy metabolism; photosynthesis. May play a key role in regulating the relative amounts of cyclic and non-cyclic electron flow to meet the demands of the plant for ATP and reducing power. The protein is Ferredoxin--NADP reductase, leaf-type isozyme, chloroplastic (PETH) of Nicotiana tabacum (Common tobacco).